Consider the following 646-residue polypeptide: Choline transporter-like protein 1 (646 aa).

Over 1-27 (MGCCGCGSEEGSVRQWKPLEQRSCTDV) the chain is Cytoplasmic. A helical transmembrane segment spans residues 28–48 (LWLLIFVLFCIGMAIICGFAI). Over 49–207 (ASGAAQRLVF…RVITGVMTSK (159 aa)) the chain is Extracellular. N133 carries N-linked (GlcNAc...) asparagine glycosylation. A helical transmembrane segment spans residues 208-228 (EIIVGLCLMSLVLSILLMVII). Topologically, residues 229–233 (RYISK) are cytoplasmic. The chain crosses the membrane as a helical span at residues 234–254 (VLVWILAILTIIGSIGGTAVL). Residues 255–281 (WWLYADHKKTLKLDPSQGDVAADNVTA) are Extracellular-facing. N278 carries N-linked (GlcNAc...) asparagine glycosylation. Residues 282–302 (LLVCAIIATVITVILLLLMLI) form a helical membrane-spanning segment. Over 303-308 (MRKRVA) the chain is Cytoplasmic. Residues 309–329 (LTIALFHVAGKVFIHIPFLIF) form a helical membrane-spanning segment. The Extracellular segment spans residues 330–331 (QS). The helical transmembrane segment at 332-352 (LWTFLALAFFWIYWIAVLLLL) threads the bilayer. Topologically, residues 353-373 (ATAGYPQKKDQGYVEFKVSGP) are cytoplasmic. A helical transmembrane segment spans residues 374 to 394 (LQYTWIYHLVGLIWISEFILA). Residues 395-435 (CQQMTIAGAVVTYYFTRDKHNLPATPILASMCRLIKYHLGT) lie on the Extracellular side of the membrane. A helical transmembrane segment spans residues 436–456 (VAKGSFIITLIKIPQMILVYI). Residues 457 to 530 (HSQLKGKENA…RVAAINTVGD (74 aa)) are Cytoplasmic-facing. A helical membrane pass occupies residues 531 to 551 (FVLFLGKLLIVLVTGFVGIIL). Over 552-559 (LNYQRDYT) the chain is Extracellular. Residues 560-580 (VWVLPLIIICLFAFFVSHCFL) traverse the membrane as a helical segment. Residues 581 to 646 (SIYEMVVDVL…KSMASGSDNA (66 aa)) lie on the Cytoplasmic side of the membrane.

The protein belongs to the CTL (choline transporter-like) family. In terms of tissue distribution, present in myelinated structures from brain and spinal cord (at protein level).

Its subcellular location is the cell membrane. The protein localises to the mitochondrion outer membrane. The catalysed reaction is choline(out) + n H(+)(in) = choline(in) + n H(+)(out). It carries out the reaction ethanolamine(out) + n H(+)(in) = ethanolamine(in) + n H(+)(out). In terms of biological role, probable choline transporter. May be involved in membrane synthesis and myelin production. The sequence is that of Choline transporter-like protein 1 (slc44a1) from Torpedo marmorata (Marbled electric ray).